Consider the following 167-residue polypeptide: Anaerobic nitrite reductase NSHB4 (167 aa).

Residues 12 to 162 enclose the Globin domain; sequence RFTEEQEALV…LVAAIKEGMK (151 aa). Residues 45–49 carry the Homodimerization motif; it reads EVAPS. Heme b is bound by residues S55, H73, R103, T107, and H108. The Homodimerization signature appears at 115-127; the sequence is DTHFEVARFALLE.

Belongs to the plant globin family. In terms of assembly, homodimer. Requires heme b as cofactor.

The protein localises to the cytoplasm. It localises to the nucleus. The enzyme catalyses Fe(III)-heme b-[protein] + nitric oxide + H2O = Fe(II)-heme b-[protein] + nitrite + 2 H(+). Its function is as follows. Phytoglobin that reduces nitrite to nitric oxide under anoxic conditions (e.g. during flooding or in waterlogged soil). May not function as an oxygen storage or transport protein. Has an unusually high affinity for O(2) through an hexacoordinate heme iron because of a very low dissociation constant. In Oryza sativa subsp. indica (Rice), this protein is Anaerobic nitrite reductase NSHB4.